The primary structure comprises 868 residues: Coatomer subunit gamma (868 aa).

Residues 1 to 11 (MWRTKRGRTRR) show a composition bias toward basic residues. The disordered stretch occupies residues 1-22 (MWRTKRGRTRRRDAGGNPWQNL). HEAT repeat units follow at residues 64-101 (REAT…IADD), 287-324 (RELS…LHPP), 326-359 (VNVC…GAES), and 360-396 (SVER…KFPR).

Belongs to the COPG family. As to quaternary structure, oligomeric complex that consists of at least the alpha, beta, beta', gamma, delta, epsilon and zeta subunits.

It localises to the cytoplasm. It is found in the golgi apparatus membrane. Its subcellular location is the cytoplasmic vesicle. The protein localises to the COPI-coated vesicle membrane. The protein resides in the endoplasmic reticulum. The coatomer is a cytosolic protein complex that binds to dilysine motifs and reversibly associates with Golgi non-clathrin-coated vesicles, which further mediate biosynthetic protein transport from the ER, via the Golgi up to the trans Golgi network. Coatomer complex is required for budding from Golgi membranes, and is essential for the retrograde Golgi-to-ER transport of dilysine-tagged proteins. The protein is Coatomer subunit gamma of Anopheles gambiae (African malaria mosquito).